We begin with the raw amino-acid sequence, 482 residues long: Falcipain-2b (482 aa).

The Cytoplasmic segment spans residues 1-35 (MDYHMDYIPNEVISHQGERFVDKYVDRKILKNKKS). Residues 1-241 (MDYHMDYIPN…PLKNSKYLLD (241 aa)) constitute a propeptide, activation peptide. Residues 16–25 (QGERFVDKYV) carry the Bipartite vacuolar targeting signal 1 motif. Residues 36–56 (LLVIISLSVLSVVGFILFYFT) traverse the membrane as a helical; Signal-anchor for type II membrane protein segment. At 57-482 (PNFRKSDLFK…GTDAFIPLIE (426 aa)) the chain is on the lumenal side. An N-linked (GlcNAc...) asparagine glycan is attached at Asn-67. The Bipartite vacuolar targeting signal 2 motif lies at 84 to 105 (KSPNGKKFIVSKIDEALSFYDN). An N-linked (GlcNAc...) asparagine glycan is attached at Asn-117. Positions 242–258 (QINYDAVIKKYKGNENF) match the Nose motif; required for the correct folding of the mature form motif. Disulfide bonds link Cys-280/Cys-321, Cys-314/Cys-355, Cys-340/Cys-360, and Cys-409/Cys-470. The active site involves Cys-283. His-415 is an active-site residue. The Arm motif; binds to host hemoglobin and required for the inhibitory interaction between the propeptide and the catalytic domain motif lies at 426 to 435 (EIVNPLTKKG).

The protein belongs to the peptidase C1 family. In terms of assembly, component of the hemozoin formation complex (HFC) composed of falcipains FP2A and/or FP2B, plasmepsins PMII, PMIII/HAP and PMIV, heme detoxifying protein HDP and falcilysin FLN. The HFC complex is involved in hemoglobin degradation and detoxification of heme in the food vacuole during the asexual blood stage.

The protein resides in the vacuole. Its subcellular location is the membrane. Functionally, cysteine protease which cleaves native host hemoglobin in the food vacuole during the asexual blood stage. Preferentially cleaves substrates which have a leucine at the P2 position. The chain is Falcipain-2b from Plasmodium falciparum (isolate 3D7).